Reading from the N-terminus, the 148-residue chain is Deoxyuridine 5'-triphosphate nucleotidohydrolase (148 aa).

Substrate-binding positions include 68-70 (RSG), Asn-81, 85-87 (TVD), and Lys-95.

Belongs to the dUTPase family. Requires Mg(2+) as cofactor.

It catalyses the reaction dUTP + H2O = dUMP + diphosphate + H(+). Its pathway is pyrimidine metabolism; dUMP biosynthesis; dUMP from dCTP (dUTP route): step 2/2. This enzyme is involved in nucleotide metabolism: it produces dUMP, the immediate precursor of thymidine nucleotides and it decreases the intracellular concentration of dUTP so that uracil cannot be incorporated into DNA. The protein is Deoxyuridine 5'-triphosphate nucleotidohydrolase of Caldanaerobacter subterraneus subsp. tengcongensis (strain DSM 15242 / JCM 11007 / NBRC 100824 / MB4) (Thermoanaerobacter tengcongensis).